Reading from the N-terminus, the 738-residue chain is uncharacterized protein (738 aa).

The signal sequence occupies residues Met1–Ala27. Helical transmembrane passes span Thr612–Ser632 and Ile712–Ile732.

The protein resides in the membrane. This is an uncharacterized protein from Mycoplasma (Bacteriophage L2).